The primary structure comprises 135 residues: MAKKWLNKVKWDDNGLVPVIVQEVGSNDVLMFAFMNRDALQRTVELGEAVFWSRSRKRLWHKGEESGHVQKVHEIRLDCDEDVVLLKVTQIDSIACHTGRHSCFFQKFEGDVESGDWQTVEPVLKDPSSIYAAKP.

Asp78 is a binding site for Mg(2+). Cys79 contributes to the Zn(2+) binding site. Positions 80 and 82 each coordinate Mg(2+). Cys96 and Cys103 together coordinate Zn(2+).

Belongs to the PRA-CH family. Homodimer. Mg(2+) serves as cofactor. The cofactor is Zn(2+).

The protein localises to the cytoplasm. It catalyses the reaction 1-(5-phospho-beta-D-ribosyl)-5'-AMP + H2O = 1-(5-phospho-beta-D-ribosyl)-5-[(5-phospho-beta-D-ribosylamino)methylideneamino]imidazole-4-carboxamide. It functions in the pathway amino-acid biosynthesis; L-histidine biosynthesis; L-histidine from 5-phospho-alpha-D-ribose 1-diphosphate: step 3/9. In terms of biological role, catalyzes the hydrolysis of the adenine ring of phosphoribosyl-AMP. The polypeptide is Phosphoribosyl-AMP cyclohydrolase (Cupriavidus metallidurans (strain ATCC 43123 / DSM 2839 / NBRC 102507 / CH34) (Ralstonia metallidurans)).